Here is a 400-residue protein sequence, read N- to C-terminus: D-alanyl-D-alanine carboxypeptidase DacC (400 aa).

The signal sequence occupies residues 1 to 27 (MTQYSSLLRGLAAGSAFLFLFAPTAFA). The active-site Acyl-ester intermediate is the Ser-66. Lys-69 serves as the catalytic Proton acceptor. Residue Ser-132 is part of the active site. Residue Lys-235 participates in substrate binding. The interval 383–400 (VWDFVMMKFHQWFGSWFS) is required for inner membrane binding.

The protein belongs to the peptidase S11 family.

The protein localises to the cell inner membrane. It catalyses the reaction Preferential cleavage: (Ac)2-L-Lys-D-Ala-|-D-Ala. Also transpeptidation of peptidyl-alanyl moieties that are N-acyl substituents of D-alanine.. Its pathway is cell wall biogenesis; peptidoglycan biosynthesis. Removes C-terminal D-alanyl residues from sugar-peptide cell wall precursors. In Escherichia coli (strain K12), this protein is D-alanyl-D-alanine carboxypeptidase DacC (dacC).